A 335-amino-acid chain; its full sequence is Ubiquinone biosynthesis protein COQ4, mitochondrial (335 aa).

The N-terminal 10 residues, 1-10 (MLRLSLLRST), are a transit peptide targeting the mitochondrion. Zn(2+) contacts are provided by His210, Asp211, His214, and Glu226.

This sequence belongs to the COQ4 family. Component of a multi-subunit COQ enzyme complex, composed of at least COQ3, COQ4, COQ5, COQ6, COQ7 and COQ9. Interacts with COQ3. Requires Zn(2+) as cofactor.

The protein localises to the mitochondrion inner membrane. It carries out the reaction 4-hydroxy-3-methoxy-5-(all-trans-hexaprenyl)benzoate + H(+) = 2-methoxy-6-(all-trans-hexaprenyl)phenol + CO2. Its pathway is cofactor biosynthesis; ubiquinone biosynthesis. In terms of biological role, lyase that catalyzes the C1-decarboxylation of 4-hydroxy-3-methoxy-5-(all-trans-hexaprenyl)benzoic acid into 2-methoxy-6-(all-trans-hexaprenyl)phenol during ubiquinone biosynthesis. The sequence is that of Ubiquinone biosynthesis protein COQ4, mitochondrial from Saccharomyces cerevisiae (strain YJM789) (Baker's yeast).